A 69-amino-acid chain; its full sequence is Large ribosomal subunit protein bL32c (69 aa).

This sequence belongs to the bacterial ribosomal protein bL32 family.

Its subcellular location is the plastid. It localises to the chloroplast. The polypeptide is Large ribosomal subunit protein bL32c (rpl32) (Anthoceros angustus (Hornwort)).